Here is a 480-residue protein sequence, read N- to C-terminus: Cysteine--tRNA ligase (480 aa).

Cys29 is a binding site for Zn(2+). The short motif at 31-41 (PTVYADPHLGH) is the 'HIGH' region element. Cys220, His245, and Glu249 together coordinate Zn(2+). A 'KMSKS' region motif is present at residues 276-280 (KMAKS). Residue Lys279 coordinates ATP.

It belongs to the class-I aminoacyl-tRNA synthetase family. In terms of assembly, monomer. Zn(2+) serves as cofactor.

The protein localises to the cytoplasm. The enzyme catalyses tRNA(Cys) + L-cysteine + ATP = L-cysteinyl-tRNA(Cys) + AMP + diphosphate. In Thermus thermophilus (strain ATCC 27634 / DSM 579 / HB8), this protein is Cysteine--tRNA ligase.